A 321-amino-acid chain; its full sequence is Lipoyl synthase (321 aa).

7 residues coordinate [4Fe-4S] cluster: C68, C73, C79, C94, C98, C101, and S308. Residues 80 to 297 (FNHGTATFMI…KALADELGFT (218 aa)) form the Radical SAM core domain.

This sequence belongs to the radical SAM superfamily. Lipoyl synthase family. [4Fe-4S] cluster serves as cofactor.

Its subcellular location is the cytoplasm. The catalysed reaction is [[Fe-S] cluster scaffold protein carrying a second [4Fe-4S](2+) cluster] + N(6)-octanoyl-L-lysyl-[protein] + 2 oxidized [2Fe-2S]-[ferredoxin] + 2 S-adenosyl-L-methionine + 4 H(+) = [[Fe-S] cluster scaffold protein] + N(6)-[(R)-dihydrolipoyl]-L-lysyl-[protein] + 4 Fe(3+) + 2 hydrogen sulfide + 2 5'-deoxyadenosine + 2 L-methionine + 2 reduced [2Fe-2S]-[ferredoxin]. Its pathway is protein modification; protein lipoylation via endogenous pathway; protein N(6)-(lipoyl)lysine from octanoyl-[acyl-carrier-protein]: step 2/2. Its function is as follows. Catalyzes the radical-mediated insertion of two sulfur atoms into the C-6 and C-8 positions of the octanoyl moiety bound to the lipoyl domains of lipoate-dependent enzymes, thereby converting the octanoylated domains into lipoylated derivatives. This is Lipoyl synthase from Shewanella baltica (strain OS223).